The chain runs to 245 residues: 1-(5-phosphoribosyl)-5-[(5-phosphoribosylamino)methylideneamino] imidazole-4-carboxamide isomerase (245 aa).

The active-site Proton acceptor is the D8. D130 acts as the Proton donor in catalysis.

Belongs to the HisA/HisF family.

The protein resides in the cytoplasm. It carries out the reaction 1-(5-phospho-beta-D-ribosyl)-5-[(5-phospho-beta-D-ribosylamino)methylideneamino]imidazole-4-carboxamide = 5-[(5-phospho-1-deoxy-D-ribulos-1-ylimino)methylamino]-1-(5-phospho-beta-D-ribosyl)imidazole-4-carboxamide. The protein operates within amino-acid biosynthesis; L-histidine biosynthesis; L-histidine from 5-phospho-alpha-D-ribose 1-diphosphate: step 4/9. This chain is 1-(5-phosphoribosyl)-5-[(5-phosphoribosylamino)methylideneamino] imidazole-4-carboxamide isomerase, found in Pseudomonas putida (strain W619).